Here is a 204-residue protein sequence, read N- to C-terminus: FlaA locus 22.9 kDa protein (204 aa).

Residues 115 to 140 form a disordered region; it reads EKTAEDQKKSSEDHTEGSADSKASSE.

In Bacillus subtilis (strain 168), this protein is FlaA locus 22.9 kDa protein (ylxF).